The chain runs to 226 residues: Gap junction beta-2 protein (226 aa).

Residues 1–20 (MDWGGLHTILGGVNKHSTSI) are Cytoplasmic-facing. A helical membrane pass occupies residues 21 to 40 (GKIWLTVLFIFRIMILVVAA). At 41–75 (KEVWGDEQADFVCNTLQPGCKNVCYDHYFPISHIR) the chain is on the extracellular side. 3 cysteine pairs are disulfide-bonded: Cys53–Cys180, Cys60–Cys174, and Cys64–Cys169. The chain crosses the membrane as a helical span at residues 76-98 (LWALQLIFVSTPALLVAMHVAYY). Over 99-131 (RHEKKRKFIRGEIKTEFKDIEEIKKQKVRIEGS) the chain is Cytoplasmic. A helical transmembrane segment spans residues 132–154 (LWWTYTGSIFFRVIFEAAFMYVF). Topologically, residues 155–192 (YVMYDGFAMQRLVKCNAWPCPNTVDCFVSRPTEKTVFT) are extracellular. A helical transmembrane segment spans residues 193–215 (VFMIAVSGICILLNVTELCYLLI). Residues 216 to 226 (RFCSGKSKKPV) are Cytoplasmic-facing.

This sequence belongs to the connexin family. A connexon is composed of a hexamer of connexins. Interacts with CNST.

Its subcellular location is the cell membrane. It is found in the cell junction. It localises to the gap junction. Its function is as follows. One gap junction consists of a cluster of closely packed pairs of transmembrane channels, the connexons, through which materials of low MW diffuse from one cell to a neighboring cell. This chain is Gap junction beta-2 protein (GJB2), found in Bos taurus (Bovine).